The sequence spans 291 residues: MTQAVLGIIGGSGIYDLPGLEGAHEEVIKSPWGEPSAPLRRGTIAGLPIVFLPRHDKGHRLSPSDINYRANIDVLKRAGVTDLISLSACGSFKEEMPPGTFVLVDQFVDRTHKRESSFFGRGCVAHVSMAHPVSPRLRIHLAAAAEAEGIAIARGGTYVCMEGPQFSTYAESMTYKTSGYSVIGMTNMPEAKLAREAEICYATVAMVTDFDCWHPDHDAVTVQDIIRVLTSNADKAKALVARLAKDFPREHEPCPIGSDRALDTALITAPEARDPELLKKLDAVAGRVLRG.

Residues S12, R54 to H55, and S87 to A88 contribute to the phosphate site. M185 is a binding site for substrate. Position 186 (T186) interacts with phosphate. Residue D209–D211 participates in substrate binding.

This sequence belongs to the PNP/MTAP phosphorylase family. MTAP subfamily. Homohexamer. Dimer of a homotrimer.

The catalysed reaction is S-methyl-5'-thioadenosine + phosphate = 5-(methylsulfanyl)-alpha-D-ribose 1-phosphate + adenine. The protein operates within amino-acid biosynthesis; L-methionine biosynthesis via salvage pathway; S-methyl-5-thio-alpha-D-ribose 1-phosphate from S-methyl-5'-thioadenosine (phosphorylase route): step 1/1. Functionally, catalyzes the reversible phosphorylation of S-methyl-5'-thioadenosine (MTA) to adenine and 5-methylthioribose-1-phosphate. Involved in the breakdown of MTA, a major by-product of polyamine biosynthesis. Responsible for the first step in the methionine salvage pathway after MTA has been generated from S-adenosylmethionine. Has broad substrate specificity with 6-aminopurine nucleosides as preferred substrates. This Bradyrhizobium diazoefficiens (strain JCM 10833 / BCRC 13528 / IAM 13628 / NBRC 14792 / USDA 110) protein is S-methyl-5'-thioadenosine phosphorylase.